The primary structure comprises 463 residues: Asparagine--tRNA ligase (463 aa).

Belongs to the class-II aminoacyl-tRNA synthetase family. Homodimer.

The protein localises to the cytoplasm. The enzyme catalyses tRNA(Asn) + L-asparagine + ATP = L-asparaginyl-tRNA(Asn) + AMP + diphosphate + H(+). The chain is Asparagine--tRNA ligase from Clostridium botulinum (strain Langeland / NCTC 10281 / Type F).